The chain runs to 655 residues: Acetyl-coenzyme A synthetase (655 aa).

Residues 196–199 (RGGR) and Thr316 contribute to the CoA site. ATP is bound by residues 392 to 394 (GEP), 416 to 421 (DTWWQT), Asp508, and Arg523. Ser531 contributes to the CoA binding site. Arg534 lines the ATP pocket. Residues Val545, His547, and Val550 each contribute to the Mg(2+) site. Lys620 carries the post-translational modification N6-acetyllysine.

It belongs to the ATP-dependent AMP-binding enzyme family. It depends on Mg(2+) as a cofactor. Acetylated. Deacetylation by the SIR2-homolog deacetylase activates the enzyme.

The catalysed reaction is acetate + ATP + CoA = acetyl-CoA + AMP + diphosphate. Its function is as follows. Catalyzes the conversion of acetate into acetyl-CoA (AcCoA), an essential intermediate at the junction of anabolic and catabolic pathways. AcsA undergoes a two-step reaction. In the first half reaction, AcsA combines acetate with ATP to form acetyl-adenylate (AcAMP) intermediate. In the second half reaction, it can then transfer the acetyl group from AcAMP to the sulfhydryl group of CoA, forming the product AcCoA. This is Acetyl-coenzyme A synthetase from Nitrosomonas europaea (strain ATCC 19718 / CIP 103999 / KCTC 2705 / NBRC 14298).